The sequence spans 476 residues: WD repeat, SAM and U-box domain-containing protein 1 (476 aa).

WD repeat units follow at residues Asp10 to His47, Phe52 to Val91, Pro95 to Cys134, Val137 to Glu176, Ala178 to Glu228, Gly237 to Thr276, and Gln279 to Ala318. In terms of domain architecture, SAM spans Trp332–Lys396. The U-box domain maps to Gly403 to Lys476. Residue Thr458 is modified to Phosphothreonine.

The protein is WD repeat, SAM and U-box domain-containing protein 1 (WDSUB1) of Homo sapiens (Human).